The chain runs to 346 residues: Cell division protein ZipA (346 aa).

Topologically, residues Met1–Leu6 are periplasmic. The helical transmembrane segment at Val7–Ile27 threads the bilayer. Topologically, residues Arg28–Ala346 are cytoplasmic. 2 disordered regions span residues Ala76–Glu103 and Gln121–Pro145.

Belongs to the ZipA family. As to quaternary structure, interacts with FtsZ via their C-terminal domains.

It is found in the cell inner membrane. Functionally, essential cell division protein that stabilizes the FtsZ protofilaments by cross-linking them and that serves as a cytoplasmic membrane anchor for the Z ring. Also required for the recruitment to the septal ring of downstream cell division proteins. The polypeptide is Cell division protein ZipA (Shewanella sp. (strain MR-4)).